Reading from the N-terminus, the 912-residue chain is Translation initiation factor IF-2 (912 aa).

Residues 26 to 297 (SDQGEFVKSA…RGRKSKRAKR (272 aa)) form a disordered region. Residues 56–74 (KPAPAASNGAAAEAAAPPK) are compositionally biased toward low complexity. Pro residues predominate over residues 100–120 (APEPPAAPAAPAAPAPKPSPA). Positions 121–131 (ARPAAAEAAAP) are enriched in low complexity. Composition is skewed to pro residues over residues 132–152 (APAP…PGAP), 173–183 (PRPQAPRPGAP), and 192–218 (NMPP…PGGG). Residues 219-283 (PRPGGAGRPG…GAAGAFGRPG (65 aa)) show a composition bias toward gly residues. Residues 287–296 (KRGRKSKRAK) show a composition bias toward basic residues. Residues 408 to 579 (TRPPVVTVMG…AVLLTADAAL (172 aa)) form the tr-type G domain. The G1 stretch occupies residues 417–424 (GHVDHGKT). 417–424 (GHVDHGKT) contacts GTP. Residues 442–446 (GITQH) are G2. The segment at 467 to 470 (DTPG) is G3. GTP contacts are provided by residues 467-471 (DTPGH) and 521-524 (NKID). A G4 region spans residues 521–524 (NKID). The segment at 557–559 (SAR) is G5.

This sequence belongs to the TRAFAC class translation factor GTPase superfamily. Classic translation factor GTPase family. IF-2 subfamily.

Its subcellular location is the cytoplasm. Functionally, one of the essential components for the initiation of protein synthesis. Protects formylmethionyl-tRNA from spontaneous hydrolysis and promotes its binding to the 30S ribosomal subunits. Also involved in the hydrolysis of GTP during the formation of the 70S ribosomal complex. This Mycobacteroides abscessus (strain ATCC 19977 / DSM 44196 / CCUG 20993 / CIP 104536 / JCM 13569 / NCTC 13031 / TMC 1543 / L948) (Mycobacterium abscessus) protein is Translation initiation factor IF-2.